Consider the following 401-residue polypeptide: Argininosuccinate synthase (401 aa).

9 to 17 contacts ATP; that stretch reads AYSGGLDTS. An L-citrulline-binding site is contributed by Y86. G116 contributes to the ATP binding site. The L-aspartate site is built by T118, N122, and D123. N122 lines the L-citrulline pocket. The L-citrulline site is built by R126, S174, S183, E259, and Y271.

This sequence belongs to the argininosuccinate synthase family. Type 1 subfamily. In terms of assembly, homotetramer.

It localises to the cytoplasm. It catalyses the reaction L-citrulline + L-aspartate + ATP = 2-(N(omega)-L-arginino)succinate + AMP + diphosphate + H(+). It participates in amino-acid biosynthesis; L-arginine biosynthesis; L-arginine from L-ornithine and carbamoyl phosphate: step 2/3. In Bacillus thuringiensis (strain Al Hakam), this protein is Argininosuccinate synthase.